A 394-amino-acid chain; its full sequence is Class II hydrophobin TH1 (394 aa).

The signal sequence occupies residues 1 to 16 (MKFLAAASLLVASTLA). A disordered region spans residues 17–42 (VPTSSGGSCRPRPPPGGGNGGNGGNG). Over residues 33 to 42 (GGNGGNGGNG) the composition is skewed to gly residues. The interval 48-117 (GYQPCPAGLY…GQAVLCQDSI (70 aa)) is hydrophobin 1. 4 disulfide bridges follow: C52–C101, C62–C92, C63–C75, and C102–C113. The tract at residues 135 to 157 (GNGGNNGGNTDYPGGNGGNNGGN) is disordered. Over residues 148 to 157 (GGNGGNNGGN) the composition is skewed to gly residues. Hydrophobin stretches follow at residues 200–270 (GYQA…QPAI) and 326–394 (GSFK…CTGA).

This sequence belongs to the cerato-ulmin hydrophobin family. In terms of assembly, homotetramer. Further self-assembles to form highly ordered films at water-air interfaces through intermolecular interactions. In terms of processing, several N-termini starting at positions 17, 20, 22, 28 and 48 have been identified by direct sequencing. Contains a number of intrachain disulfide bonds. Post-translationally, not glycosylated.

It is found in the secreted. It localises to the cell wall. Aerial growth, conidiation, and dispersal of filamentous fungi in the environment rely upon a capability of their secreting small amphipathic proteins called hydrophobins (HPBs) with low sequence identity. Class I can self-assemble into an outermost layer of rodlet bundles on aerial cell surfaces, conferring cellular hydrophobicity that supports fungal growth, development and dispersal; whereas Class II form highly ordered films at water-air interfaces through intermolecular interactions but contribute nothing to the rodlet structure. TH1 is a class II hydrophobin that reduces water surface tension dramatically upon assembly at the water-air interface and plays a role in the formation of aerial hyphae. This chain is Class II hydrophobin TH1 (TH1), found in Claviceps fusiformis (Ergot fungus).